A 624-amino-acid polypeptide reads, in one-letter code: Phosphoenolpyruvate carboxykinase (ATP) 1 (624 aa).

The interval 1–22 is disordered; sequence MASPNGGVTTYDYDDSDSAAPV. Residue 322–329 participates in ATP binding; it reads GLSGTGKT.

It belongs to the phosphoenolpyruvate carboxykinase (ATP) family. As to quaternary structure, homohexamer. As to expression, green leaves but not in roots or etiolated shoots.

It localises to the cytoplasm. The catalysed reaction is oxaloacetate + ATP = phosphoenolpyruvate + ADP + CO2. It functions in the pathway carbohydrate biosynthesis; gluconeogenesis. This chain is Phosphoenolpyruvate carboxykinase (ATP) 1 (PCK1), found in Urochloa panicoides (Panic liverseed grass).